Consider the following 334-residue polypeptide: Protein-methionine-sulfoxide reductase catalytic subunit MsrP (334 aa).

Positions 1-44 form a signal peptide, tat-type signal; that stretch reads MKKNQFLKESDVTAESVFFMTRRQVLKALGISAAALSLPHAAHA. Mo-molybdopterin is bound by residues asparagine 88, 91–92, cysteine 146, threonine 181, asparagine 233, arginine 238, and 249–251; these read YE and GIK.

The protein belongs to the MsrP family. Heterodimer of a catalytic subunit (MsrP) and a heme-binding subunit (MsrQ). Requires Mo-molybdopterin as cofactor. Predicted to be exported by the Tat system. The position of the signal peptide cleavage has not been experimentally proven.

It is found in the periplasm. The catalysed reaction is L-methionyl-[protein] + a quinone + H2O = L-methionyl-(S)-S-oxide-[protein] + a quinol. It carries out the reaction L-methionyl-[protein] + a quinone + H2O = L-methionyl-(R)-S-oxide-[protein] + a quinol. Part of the MsrPQ system that repairs oxidized periplasmic proteins containing methionine sulfoxide residues (Met-O), using respiratory chain electrons. Thus protects these proteins from oxidative-stress damage caused by reactive species of oxygen and chlorine generated by the host defense mechanisms. MsrPQ is essential for the maintenance of envelope integrity under bleach stress, rescuing a wide series of structurally unrelated periplasmic proteins from methionine oxidation, including the primary periplasmic chaperone SurA and the lipoprotein Pal. The catalytic subunit MsrP is non-stereospecific, being able to reduce both (R-) and (S-) diastereoisomers of methionine sulfoxide. The sequence is that of Protein-methionine-sulfoxide reductase catalytic subunit MsrP from Escherichia coli (strain 55989 / EAEC).